Reading from the N-terminus, the 234-residue chain is Phosphoglycolate phosphatase (234 aa).

Aspartate 9 functions as the Nucleophile in the catalytic mechanism. The Mg(2+) site is built by aspartate 9 and aspartate 11. Lysine 162 is a substrate binding site. The Mg(2+) site is built by aspartate 185 and aspartate 189.

This sequence belongs to the archaeal SPP-like hydrolase family. Mg(2+) is required as a cofactor.

It carries out the reaction 2-phosphoglycolate + H2O = glycolate + phosphate. Functionally, catalyzes the dephosphorylation of 2-phosphoglycolate. This is Phosphoglycolate phosphatase from Methanobrevibacter smithii (strain ATCC 35061 / DSM 861 / OCM 144 / PS).